A 203-amino-acid polypeptide reads, in one-letter code: Dephospho-CoA kinase (203 aa).

One can recognise a DPCK domain in the interval V4–E203. Position 12 to 17 (A12 to T17) interacts with ATP.

It belongs to the CoaE family.

The protein localises to the cytoplasm. The enzyme catalyses 3'-dephospho-CoA + ATP = ADP + CoA + H(+). It functions in the pathway cofactor biosynthesis; coenzyme A biosynthesis; CoA from (R)-pantothenate: step 5/5. Its function is as follows. Catalyzes the phosphorylation of the 3'-hydroxyl group of dephosphocoenzyme A to form coenzyme A. The chain is Dephospho-CoA kinase from Staphylococcus epidermidis (strain ATCC 35984 / DSM 28319 / BCRC 17069 / CCUG 31568 / BM 3577 / RP62A).